Reading from the N-terminus, the 321-residue chain is Ribose-phosphate pyrophosphokinase C (321 aa).

Mg(2+) is bound by residues Asp-132 and Asp-147. The interval 214–229 (SGKVAIIIGSIADTCE) is binding of phosphoribosylpyrophosphate.

The protein belongs to the ribose-phosphate pyrophosphokinase family. The cofactor is Mg(2+).

It localises to the cytoplasm. The enzyme catalyses D-ribose 5-phosphate + ATP = 5-phospho-alpha-D-ribose 1-diphosphate + AMP + H(+). It participates in metabolic intermediate biosynthesis; 5-phospho-alpha-D-ribose 1-diphosphate biosynthesis; 5-phospho-alpha-D-ribose 1-diphosphate from D-ribose 5-phosphate (route I): step 1/1. The sequence is that of Ribose-phosphate pyrophosphokinase C (prsC) from Dictyostelium discoideum (Social amoeba).